The sequence spans 620 residues: Chaperone protein HscA homolog (620 aa).

This sequence belongs to the heat shock protein 70 family.

Functionally, chaperone involved in the maturation of iron-sulfur cluster-containing proteins. Has a low intrinsic ATPase activity which is markedly stimulated by HscB. This chain is Chaperone protein HscA homolog, found in Shewanella putrefaciens (strain CN-32 / ATCC BAA-453).